Here is a 97-residue protein sequence, read N- to C-terminus: Ferredoxin-like protein YdiT (97 aa).

It belongs to the bacterial-type ferredoxin family. FixX subfamily.

Functionally, could be a 3Fe-4S cluster-containing protein. Probably participates in a redox process with YdiQ, YdiR and YdiS. The protein is Ferredoxin-like protein YdiT (ydiT) of Escherichia coli (strain K12).